The primary structure comprises 206 residues: RNA pyrophosphohydrolase (206 aa).

Residues 6–150 form the Nudix hydrolase domain; it reads GYRPNVGIVI…KRDVYRKVMK (145 aa). Positions 38 to 59 match the Nudix box motif; sequence GGINEGENIETAMYRELYEEVG. Residues 162 to 191 are compositionally biased toward basic and acidic residues; sequence KPETVEKPRVERTEKRDFQKRDNQKREFRK. The interval 162 to 206 is disordered; the sequence is KPETVEKPRVERTEKRDFQKRDNQKREFRKSARTWNNSHQKGKAQ.

The protein belongs to the Nudix hydrolase family. RppH subfamily. A divalent metal cation serves as cofactor.

In terms of biological role, accelerates the degradation of transcripts by removing pyrophosphate from the 5'-end of triphosphorylated RNA, leading to a more labile monophosphorylated state that can stimulate subsequent ribonuclease cleavage. The chain is RNA pyrophosphohydrolase from Actinobacillus pleuropneumoniae serotype 3 (strain JL03).